Consider the following 291-residue polypeptide: Quinol oxidase subunit 2 (291 aa).

The first 28 residues, 1–28, serve as a signal peptide directing secretion; that stretch reads MQLKKAFWKLASLLPLSLLLFLGGCDKK. 2 helical membrane passes run 49 to 69 and 91 to 111; these read SFLL…VILI and LEII…IPTV.

The protein belongs to the cytochrome c oxidase subunit 2 family.

It is found in the cell membrane. It catalyses the reaction 2 a quinol + O2 = 2 a quinone + 2 H2O. Its function is as follows. Catalyzes quinol oxidation with the concomitant reduction of oxygen to water. Subunit II transfers the electrons from a quinol to the binuclear center of the catalytic subunit I. In Bacillus cereus (strain ATCC 14579 / DSM 31 / CCUG 7414 / JCM 2152 / NBRC 15305 / NCIMB 9373 / NCTC 2599 / NRRL B-3711), this protein is Quinol oxidase subunit 2.